The following is a 72-amino-acid chain: DNA-directed RNA polymerase subunit Rpo10 (72 aa).

Residues cysteine 7, cysteine 10, cysteine 53, and cysteine 54 each contribute to the Zn(2+) site.

Belongs to the archaeal Rpo10/eukaryotic RPB10 RNA polymerase subunit family. As to quaternary structure, part of the RNA polymerase complex. Zn(2+) serves as cofactor.

Its subcellular location is the cytoplasm. It carries out the reaction RNA(n) + a ribonucleoside 5'-triphosphate = RNA(n+1) + diphosphate. In terms of biological role, DNA-dependent RNA polymerase (RNAP) catalyzes the transcription of DNA into RNA using the four ribonucleoside triphosphates as substrates. In Thermoplasma volcanium (strain ATCC 51530 / DSM 4299 / JCM 9571 / NBRC 15438 / GSS1), this protein is DNA-directed RNA polymerase subunit Rpo10.